We begin with the raw amino-acid sequence, 201 residues long: Probable molybdenum cofactor guanylyltransferase (201 aa).

Residues 6-8 (LAG), K18, D65, and D97 each bind GTP. D97 contacts Mg(2+).

Belongs to the MobA family. The cofactor is Mg(2+).

The protein localises to the cytoplasm. It carries out the reaction Mo-molybdopterin + GTP + H(+) = Mo-molybdopterin guanine dinucleotide + diphosphate. In terms of biological role, transfers a GMP moiety from GTP to Mo-molybdopterin (Mo-MPT) cofactor (Moco or molybdenum cofactor) to form Mo-molybdopterin guanine dinucleotide (Mo-MGD) cofactor. This Staphylococcus epidermidis (strain ATCC 35984 / DSM 28319 / BCRC 17069 / CCUG 31568 / BM 3577 / RP62A) protein is Probable molybdenum cofactor guanylyltransferase.